We begin with the raw amino-acid sequence, 424 residues long: Putative glutamate--cysteine ligase 2-3 (424 aa).

2 disordered regions span residues 1–20 (MQMA…PVLV) and 405–424 (GAAA…VRRP).

Belongs to the glutamate--cysteine ligase type 2 family. YbdK subfamily.

It catalyses the reaction L-cysteine + L-glutamate + ATP = gamma-L-glutamyl-L-cysteine + ADP + phosphate + H(+). Functionally, ATP-dependent carboxylate-amine ligase which exhibits weak glutamate--cysteine ligase activity. This chain is Putative glutamate--cysteine ligase 2-3, found in Paenarthrobacter aurescens (strain TC1).